Reading from the N-terminus, the 602-residue chain is Arginine--tRNA ligase (602 aa).

The short motif at 124-134 is the 'HIGH' region element; sequence ANPTGPVHVGR.

This sequence belongs to the class-I aminoacyl-tRNA synthetase family.

The protein localises to the cytoplasm. It catalyses the reaction tRNA(Arg) + L-arginine + ATP = L-arginyl-tRNA(Arg) + AMP + diphosphate. This Halorubrum lacusprofundi (strain ATCC 49239 / DSM 5036 / JCM 8891 / ACAM 34) protein is Arginine--tRNA ligase.